Consider the following 2364-residue polypeptide: Cytotoxin-L (2364 aa).

The tract at residues 1 to 91 (MNLVNKAQLQ…EVLELKNNSL (91 aa)) is four-helical bundle. The region spanning 96-468 (KNLHFIWIGG…APDVRSTINL (373 aa)) is the GT44 domain. A glucosyltransferase region region spans residues 96 to 468 (KNLHFIWIGG…APDVRSTINL (373 aa)). UDP-alpha-D-glucose contacts are provided by residues 101 to 103 (IWI), asparagine 139, 265 to 270 (LAAASD), and 286 to 288 (DVD). Residues aspartate 288, glutamate 515, and serine 518 each contribute to the Mg(2+) site. Position 518 to 520 (518 to 520 (SLW)) interacts with UDP-alpha-D-glucose. The segment at 544-799 (GEDDNLDFAQ…KSKYLHELST (256 aa)) is autoprocessing region. Zn(2+)-binding residues include glutamate 545 and aspartate 546. The Peptidase C80 domain occupies 567 to 774 (LSSMKTRNKE…EESIIKDISS (208 aa)). Residues tyrosine 577, lysine 600, and lysine 647 each coordinate 1D-myo-inositol hexakisphosphate. Residue histidine 653 coordinates Zn(2+). The active-site For protease activity is the histidine 653. The active-site Nucleophile; for protease activity is the cysteine 698. Residue histidine 757 coordinates Zn(2+). 1D-myo-inositol hexakisphosphate is bound by residues lysine 764, lysine 775, and lysine 792. The tract at residues 800–1500 (LLQEIRNNAN…ESIIRNIYMP (701 aa)) is translocation region. Interaction with host SEMA6A and SEMA6B regions lie at residues 1433-1438 (CMKLIE), 1466-1471 (DNETKY), 1484-1495 (FTAEFSNESIIR), 1504-1511 (NLFIYSSK), and 1596-1601 (YNNLDP). Cell wall-binding repeat units follow at residues 1813-1832 (EFGLVSLDNDYFYINSFGNM), 1833-1852 (VSGLIYINDSLYYFKPPKNN), 1854-1873 (ITGFTTIDGNKYYFDPTKSG), 1876-1895 (SIGEITIDGKDYYFNKQGIL), 1926-1945 (FIGKLNIDGKIYYFEDNYRA), 1946-1965 (AVEWKLLDDETYYFNPKTGE), 1967-1986 (LKGLHQIGDNKYYFDDNGIM), 1987-2006 (QTGFITINDKVFYFNNDGVM), 2007-2026 (QVGYIEVNGKYFYFGKNGER), 2057-2076 (YNGILNFNGKIYFFDISNTA), 2077-2097 (VVGWGTLDDGSTYYFDDNRAE), 2099-2118 (CIGLTVINDCKYYFDDNGIR), 2119-2138 (QLGFITINDNIFYFSESGKI), 2139-2158 (ELGYQNINGNYFYIDESGLV), 2209-2224 (ETGWIENETDKYYFDP), 2227-2249 (KKAYKGINVVDDIKYYFDENGIM), 2250-2269 (RTGLISFENNNYYFNEDGKM), 2270-2289 (QFGYLNIKDKMFYFGKDGKM), 2320-2339 (YTGWLDLDGKRYYFTDEYIA), and 2340-2359 (ATGSLTIDGYNYYFDPDTAE). The tract at residues 1835–2364 (GLIYINDSLY…PDTAELVVSE (530 aa)) is receptor-binding (CROPS) region.

This sequence belongs to the clostridial glucosylating toxin (LCGT) family. In terms of assembly, homomultimer; forms an inactive homomultimer at pH 8, which dissociates at pH 4, leading to cytotoxicity. Interacts with host SEMA6A; interaction promotes toxin entry into host cell. Interacts with host SEMA6B; interaction promotes toxin entry into host cell. Requires Zn(2+) as cofactor. It depends on Mn(2+) as a cofactor. The cofactor is Mg(2+). Post-translationally, undergoes autocatalytic cleavage to release the N-terminal part (Glucosyltransferase TcsL), which constitutes the active part of the toxin, in the host cytosol. 1D-myo-inositol hexakisphosphate-binding (InsP6) activates the peptidase C80 domain and promotes autoprocessing.

It is found in the secreted. It localises to the host endosome membrane. The protein resides in the host cytoplasm. The protein localises to the host cytosol. Its subcellular location is the host cell membrane. The enzyme catalyses L-threonyl-[protein] + UDP-alpha-D-glucose = 3-O-(alpha-D-glucosyl)-L-threonyl-[protein] + UDP + H(+). With respect to regulation, protease activity is activated upon binding to 1D-myo-inositol hexakisphosphate (InsP6), which induces conformational reorganization. Precursor of a cytotoxin that targets the vascular endothelium, inducing an anti-inflammatory effect and resulting in lethal toxic shock syndrome. TcsL constitutes the main toxin that mediates the pathology of P.sordellii infection, an anaerobic Gram-positive bacterium found in soil and in the gastrointestinal and vaginal tracts of animals and humans; although the majority of carriers are asymptomatic, pathogenic P.sordellii infections arise rapidly and are highly lethal. This form constitutes the precursor of the toxin: it enters into host cells and mediates autoprocessing to release the active toxin (Glucosyltransferase TcsL) into the host cytosol. Targets vascular endothelium by binding to the semaphorin proteins SEMA6A and SEMA6B, and enters host cells via clathrin-mediated endocytosis. Once entered into host cells, acidification in the endosome promotes the membrane insertion of the translocation region and formation of a pore, leading to translocation of the GT44 and peptidase C80 domains across the endosomal membrane. This activates the peptidase C80 domain and autocatalytic processing, releasing the N-terminal part (Glucosyltransferase TcsL), which constitutes the active part of the toxin, in the cytosol. Its function is as follows. Active form of the toxin, which is released into the host cytosol following autoprocessing and inactivates small GTPases. Acts by mediating monoglucosylation of small GTPases of the Ras (H-Ras/HRAS, K-Ras/KRAS, N-Ras/NRAS and Ral/RALA) family in host cells at the conserved threonine residue located in the switch I region ('Thr-37/35'), using UDP-alpha-D-glucose as the sugar donor. Also able to catalyze monoglucosylation of some members of the Rho family (Rac1 and Rap2A), but with less efficiency than with Ras proteins. Monoglucosylation of host small GTPases completely prevents the recognition of the downstream effector, blocking the GTPases in their inactive form and leading to apoptosis. Induces an anti-inflammatory effect, mainly by inactivating Ras proteins which results in blockage of the cell cycle and killing of immune cells. The absence or moderate local inflammatory response allows C.sordellii spreading in deep tissues, production of toxin which is released in the general circulation and causes a toxic shock syndrome. The polypeptide is Cytotoxin-L (Paraclostridium sordellii (Clostridium sordellii)).